We begin with the raw amino-acid sequence, 294 residues long: Nucleotide-binding protein Dtur_1129 (294 aa).

Residue 10–17 (GLSGAGKS) coordinates ATP. 61–64 (DIRT) contacts GTP.

This sequence belongs to the RapZ-like family.

Functionally, displays ATPase and GTPase activities. In Dictyoglomus turgidum (strain DSM 6724 / Z-1310), this protein is Nucleotide-binding protein Dtur_1129.